Consider the following 487-residue polypeptide: Probable cytochrome P450 516A1 (487 aa).

Residues 1 to 21 (MIILLLSIIIFILYIVKIFKN) form a helical membrane-spanning segment. Cys-434 contacts heme.

Belongs to the cytochrome P450 family. Requires heme as cofactor.

It is found in the membrane. The chain is Probable cytochrome P450 516A1 (cyp516A1) from Dictyostelium discoideum (Social amoeba).